Consider the following 328-residue polypeptide: tRNA uridine(34) hydroxylase (328 aa).

The region spanning L130 to E224 is the Rhodanese domain. C184 acts as the Cysteine persulfide intermediate in catalysis.

Belongs to the TrhO family.

It catalyses the reaction uridine(34) in tRNA + AH2 + O2 = 5-hydroxyuridine(34) in tRNA + A + H2O. Functionally, catalyzes oxygen-dependent 5-hydroxyuridine (ho5U) modification at position 34 in tRNAs. The sequence is that of tRNA uridine(34) hydroxylase from Streptococcus sanguinis (strain SK36).